The sequence spans 526 residues: Peptide chain release factor 3 (526 aa).

Positions 9-277 (DKRRTFAIIS…GIVEWAPRPQ (269 aa)) constitute a tr-type G domain. GTP contacts are provided by residues 18 to 25 (SHPDAGKT), 86 to 90 (DTPGH), and 140 to 143 (NKLD).

The protein belongs to the TRAFAC class translation factor GTPase superfamily. Classic translation factor GTPase family. PrfC subfamily.

It is found in the cytoplasm. Its function is as follows. Increases the formation of ribosomal termination complexes and stimulates activities of RF-1 and RF-2. It binds guanine nucleotides and has strong preference for UGA stop codons. It may interact directly with the ribosome. The stimulation of RF-1 and RF-2 is significantly reduced by GTP and GDP, but not by GMP. In Shewanella loihica (strain ATCC BAA-1088 / PV-4), this protein is Peptide chain release factor 3.